The chain runs to 73 residues: Translational regulator CsrA (73 aa).

It belongs to the CsrA/RsmA family. In terms of assembly, homodimer; the beta-strands of each monomer intercalate to form a hydrophobic core, while the alpha-helices form wings that extend away from the core.

It localises to the cytoplasm. A translational regulator that binds mRNA to regulate translation initiation and/or mRNA stability. Usually binds in the 5'-UTR at or near the Shine-Dalgarno sequence preventing ribosome-binding, thus repressing translation. Its main target seems to be the major flagellin gene, while its function is anatagonized by FliW. This chain is Translational regulator CsrA, found in Clostridium kluyveri (strain NBRC 12016).